We begin with the raw amino-acid sequence, 186 residues long: Protein GrpE (186 aa).

Residues 1 to 15 show a composition bias toward polar residues; that stretch reads MADEQQTLDQQTPEQ. The interval 1–20 is disordered; that stretch reads MADEQQTLDQQTPEQPTGAA.

Belongs to the GrpE family. In terms of assembly, homodimer.

It localises to the cytoplasm. In terms of biological role, participates actively in the response to hyperosmotic and heat shock by preventing the aggregation of stress-denatured proteins, in association with DnaK and GrpE. It is the nucleotide exchange factor for DnaK and may function as a thermosensor. Unfolded proteins bind initially to DnaJ; upon interaction with the DnaJ-bound protein, DnaK hydrolyzes its bound ATP, resulting in the formation of a stable complex. GrpE releases ADP from DnaK; ATP binding to DnaK triggers the release of the substrate protein, thus completing the reaction cycle. Several rounds of ATP-dependent interactions between DnaJ, DnaK and GrpE are required for fully efficient folding. This is Protein GrpE from Pseudomonas aeruginosa (strain LESB58).